A 600-amino-acid polypeptide reads, in one-letter code: Aspartate--tRNA(Asp/Asn) ligase (600 aa).

Position 174 (Glu174) interacts with L-aspartate. The tract at residues 198-201 is aspartate; that stretch reads QLFK. Residue Arg220 coordinates L-aspartate. ATP contacts are provided by residues 220–222 and Gln229; that span reads RDE. His457 is an L-aspartate binding site. ATP is bound at residue Glu491. Arg498 lines the L-aspartate pocket. 543–546 contributes to the ATP binding site; that stretch reads GLDR.

It belongs to the class-II aminoacyl-tRNA synthetase family. Type 1 subfamily. As to quaternary structure, homodimer.

It localises to the cytoplasm. It carries out the reaction tRNA(Asx) + L-aspartate + ATP = L-aspartyl-tRNA(Asx) + AMP + diphosphate. Its function is as follows. Aspartyl-tRNA synthetase with relaxed tRNA specificity since it is able to aspartylate not only its cognate tRNA(Asp) but also tRNA(Asn). Reaction proceeds in two steps: L-aspartate is first activated by ATP to form Asp-AMP and then transferred to the acceptor end of tRNA(Asp/Asn). The chain is Aspartate--tRNA(Asp/Asn) ligase from Burkholderia orbicola (strain AU 1054).